We begin with the raw amino-acid sequence, 108 residues long: Signal recognition particle 19 kDa protein (108 aa).

Belongs to the SRP19 family. In terms of assembly, part of the signal recognition particle protein translocation system, which is composed of SRP and FtsY. Archaeal SRP consists of a 7S RNA molecule of 300 nucleotides and two protein subunits: SRP54 and SRP19.

Its subcellular location is the cytoplasm. Involved in targeting and insertion of nascent membrane proteins into the cytoplasmic membrane. Binds directly to 7S RNA and mediates binding of the 54 kDa subunit of the SRP. This chain is Signal recognition particle 19 kDa protein, found in Thermococcus kodakarensis (strain ATCC BAA-918 / JCM 12380 / KOD1) (Pyrococcus kodakaraensis (strain KOD1)).